The sequence spans 228 residues: Flagellar L-ring protein (228 aa).

The N-terminal stretch at 1–17 (MHYLRYFAIAFLLLLSS) is a signal peptide. The N-palmitoyl cysteine moiety is linked to residue cysteine 18. Cysteine 18 carries the S-diacylglycerol cysteine lipid modification.

It belongs to the FlgH family. In terms of assembly, the basal body constitutes a major portion of the flagellar organelle and consists of four rings (L,P,S, and M) mounted on a central rod.

Its subcellular location is the cell membrane. The protein resides in the bacterial flagellum basal body. In terms of biological role, assembles around the rod to form the L-ring and probably protects the motor/basal body from shearing forces during rotation. This is Flagellar L-ring protein from Wigglesworthia glossinidia brevipalpis.